The primary structure comprises 389 residues: Carbamoyl phosphate synthase small chain (389 aa).

The tract at residues 1 to 199 is CPSase; the sequence is MFNPAILVLA…AGKPFNLQTT (199 aa). Residues Ser-50, Gly-251, and Gly-253 each contribute to the L-glutamine site. The Glutamine amidotransferase type-1 domain maps to 203–389; that stretch reads HVVAYDFGIK…FINAVQATKA (187 aa). Residue Cys-279 is the Nucleophile of the active site. L-glutamine contacts are provided by Leu-280, Gln-283, Asn-321, Gly-323, and Phe-324. Catalysis depends on residues His-363 and Glu-365.

It belongs to the CarA family. Composed of two chains; the small (or glutamine) chain promotes the hydrolysis of glutamine to ammonia, which is used by the large (or ammonia) chain to synthesize carbamoyl phosphate. Tetramer of heterodimers (alpha,beta)4.

It catalyses the reaction hydrogencarbonate + L-glutamine + 2 ATP + H2O = carbamoyl phosphate + L-glutamate + 2 ADP + phosphate + 2 H(+). It carries out the reaction L-glutamine + H2O = L-glutamate + NH4(+). The protein operates within amino-acid biosynthesis; L-arginine biosynthesis; carbamoyl phosphate from bicarbonate: step 1/1. Its pathway is pyrimidine metabolism; UMP biosynthesis via de novo pathway; (S)-dihydroorotate from bicarbonate: step 1/3. Functionally, small subunit of the glutamine-dependent carbamoyl phosphate synthetase (CPSase). CPSase catalyzes the formation of carbamoyl phosphate from the ammonia moiety of glutamine, carbonate, and phosphate donated by ATP, constituting the first step of 2 biosynthetic pathways, one leading to arginine and/or urea and the other to pyrimidine nucleotides. The small subunit (glutamine amidotransferase) binds and cleaves glutamine to supply the large subunit with the substrate ammonia. The chain is Carbamoyl phosphate synthase small chain from Haemophilus ducreyi (strain 35000HP / ATCC 700724).